A 309-amino-acid chain; its full sequence is Homoserine kinase (309 aa).

91 to 101 (PIGSGLGSSAC) is an ATP binding site.

The protein belongs to the GHMP kinase family. Homoserine kinase subfamily.

It localises to the cytoplasm. It carries out the reaction L-homoserine + ATP = O-phospho-L-homoserine + ADP + H(+). The protein operates within amino-acid biosynthesis; L-threonine biosynthesis; L-threonine from L-aspartate: step 4/5. Its function is as follows. Catalyzes the ATP-dependent phosphorylation of L-homoserine to L-homoserine phosphate. The sequence is that of Homoserine kinase from Edwardsiella ictaluri (strain 93-146).